We begin with the raw amino-acid sequence, 383 residues long: MDALEITQKLISYPTITPKECGIFEYIKSLFPHFKTLECGENGVKNLFLYRIFNPPKDHAEEKHAKENVKPLHFSFAGHIDVVPPGDHWQNDPFKPVIKEGFLYGRGAQDMKGGVGAFLSASLNFNPKTPFLLSILLTSDEEGPGIFGTKLMLEKLKEKDLLPHMAIVAEPTCEKVLGDSIKIGRRGSINGKLILKGIQGHAAYPKKCQNPIDTLASVLPLISGVNLDDGDEYFDPSKLVITNLHAGLGANNVTPASVEIIFNARHSLKTTKESLKEYLEKVLKDLPHTLELESSSSPFITASHSKLTSVLKENILKTCRTTPLLNTKGGTSDARFFSAHGIEVVEFGVINDRIHAIDERVSLKELELLEKVFLGVLEDLSEK.

H79 lines the Zn(2+) pocket. D81 is a catalytic residue. D110 provides a ligand contact to Zn(2+). Catalysis depends on E141, which acts as the Proton acceptor. Zn(2+)-binding residues include E142, E170, and H355.

The protein belongs to the peptidase M20A family. DapE subfamily. Homodimer. It depends on Zn(2+) as a cofactor. The cofactor is Co(2+).

The catalysed reaction is N-succinyl-(2S,6S)-2,6-diaminopimelate + H2O = (2S,6S)-2,6-diaminopimelate + succinate. It participates in amino-acid biosynthesis; L-lysine biosynthesis via DAP pathway; LL-2,6-diaminopimelate from (S)-tetrahydrodipicolinate (succinylase route): step 3/3. Its function is as follows. Catalyzes the hydrolysis of N-succinyl-L,L-diaminopimelic acid (SDAP), forming succinate and LL-2,6-diaminopimelate (DAP), an intermediate involved in the bacterial biosynthesis of lysine and meso-diaminopimelic acid, an essential component of bacterial cell walls. This Helicobacter pylori (strain HPAG1) protein is Succinyl-diaminopimelate desuccinylase.